The chain runs to 137 residues: Putative nickel-responsive regulator (137 aa).

The Ni(2+) site is built by His-78, His-89, His-91, and Cys-97.

The protein belongs to the transcriptional regulatory CopG/NikR family. It depends on Ni(2+) as a cofactor.

Functionally, transcriptional regulator. The protein is Putative nickel-responsive regulator of Syntrophus aciditrophicus (strain SB).